Consider the following 362-residue polypeptide: Red-sensitive opsin (362 aa).

At 1–49 (MAAWEAAFAARRRHEEEDTTRDSVFTYTNSNNTRGPFEGPNYHIAPRWV) the chain is on the extracellular side. An N-linked (GlcNAc...) asparagine glycan is attached at N31. A helical transmembrane segment spans residues 50–74 (YNLTSVWMIFVVAASVFTNGLVLVA). The Cytoplasmic segment spans residues 75-86 (TWKFKKLRHPLN). A helical membrane pass occupies residues 87–112 (WILVNLAVADLGETVIASTISVINQI). Residues 113–126 (SGYFILGHPMCVVE) lie on the Extracellular side of the membrane. An intrachain disulfide couples C123 to C200. The chain crosses the membrane as a helical span at residues 127-146 (GYTVSACGITALWSLAIISW). Residues 147–165 (ERWFVVCKPFGNIKFDGKL) lie on the Cytoplasmic side of the membrane. Residues 166 to 189 (AVAGILFSWLWSCAWTAPPIFGWS) form a helical membrane-spanning segment. The Extracellular segment spans residues 190-215 (RYWPHGLKTSCGPDVFSGSSDPGVQS). The helical transmembrane segment at 216 to 243 (YMVVLMVTCCFFPLAIIILCYLQVWLAI) threads the bilayer. At 244–265 (RAVAAQQKESESTQKAEKEVSR) the chain is on the cytoplasmic side. Residues 266–289 (MVVVMIVAYCFCWGPYTFFACFAA) traverse the membrane as a helical segment. At 290–297 (ANPGYAFH) the chain is on the extracellular side. Residues 298–322 (PLAAALPAYFAKSATIYNPIIYVFM) traverse the membrane as a helical segment. Position 309 is an N6-(retinylidene)lysine (K309). Topologically, residues 323-362 (NRQFRNCILQLFGKKVDDGSEVSTSRTEVSSVSNSSVSPA) are cytoplasmic.

It belongs to the G-protein coupled receptor 1 family. Opsin subfamily. Phosphorylated on some or all of the serine and threonine residues present in the C-terminal region. As to expression, the color pigments are found in the cone photoreceptor cells.

It localises to the membrane. In terms of biological role, visual pigments are the light-absorbing molecules that mediate vision. They consist of an apoprotein, opsin, covalently linked to cis-retinal. This Gallus gallus (Chicken) protein is Red-sensitive opsin.